The sequence spans 154 residues: Transcription antitermination protein NusB (154 aa).

This sequence belongs to the NusB family.

Functionally, involved in transcription antitermination. Required for transcription of ribosomal RNA (rRNA) genes. Binds specifically to the boxA antiterminator sequence of the ribosomal RNA (rrn) operons. The chain is Transcription antitermination protein NusB from Enterococcus faecalis (strain ATCC 700802 / V583).